The following is a 363-amino-acid chain: Inactive CLIP domain-containing serine protease A8 (363 aa).

The signal sequence occupies residues methionine 1–alanine 25. The Clip domain occupies leucine 33 to serine 82. Disulfide bonds link cysteine 36/cysteine 80, cysteine 41/cysteine 73, and cysteine 47/cysteine 81. Residues asparagine 49, asparagine 83, asparagine 117, and asparagine 166 are each glycosylated (N-linked (GlcNAc...) asparagine). Residues valine 114–glutamate 360 form the Peptidase S1 domain. Disulfide bonds link cysteine 245-cysteine 317, cysteine 276-cysteine 297, and cysteine 307-cysteine 336. Asparagine 319 and asparagine 356 each carry an N-linked (GlcNAc...) asparagine glycan.

It belongs to the peptidase S1 family. CLIP subfamily. In terms of assembly, heterodimer of a light chain and a heavy chain; disulfide-linked. In terms of processing, secreted as a full-length protein. Proteolytically cleaved into two chains which remain covalently linked. Cleavage is induced by Gram-positive or Gram-negative bacteria infection.

It localises to the secreted. Its function is as follows. Inactive serine protease which plays an essential role in the innate immune response against bacteria, fungi and protozoa infection by activating the melanization cascade. In the melanization cascade, acts downstream of TEP1 and SPCLIP1 to promote CLIPA28 and CLIPC9 proteolytic cleavage and CLIPC9 recruitment to microbial surfaces. In the resistant strain L3-5, required for the melanization of killed parasite P.berghei ookinetes which results in their clearance. In the susceptible strain G3, appears to be dispensable for ookinete elimination which occurs by lysis. Required for the melanization of Gram-positive and Gram-negative bacteria. During the late stage of fungus B.bassiana-mediated infection, required for the initiation of hyphae melanization by promoting prophenoloxidase PPO activation. The sequence is that of Inactive CLIP domain-containing serine protease A8 from Anopheles gambiae (African malaria mosquito).